Reading from the N-terminus, the 660-residue chain is Phosphatidylinositol-3-phosphate phosphatase MTMR7 (660 aa).

A Myotubularin phosphatase domain is found at 126–504; that stretch reads GWVLIDLSEE…FMYKFWSGMY (379 aa). 3 residues coordinate a 1,2-diacyl-sn-glycero-3-phospho-(1D-myo-inositol-3-phosphate): N250, N275, and I276. The active-site Phosphocysteine intermediate is the C338. The a 1,2-diacyl-sn-glycero-3-phospho-(1D-myo-inositol-3-phosphate) site is built by S339, D340, G341, W342, D343, R344, and R384. A coiled-coil region spans residues 514-558; the sequence is RQSVTDYLMAVKEETQQLEEELEALEERLEKIQKVQLNCTKVKSK. The interval 554–660 is disordered; sequence KVKSKQSEPS…DSDEAVFLTA (107 aa). Positions 566 to 596 are enriched in polar residues; it reads SGFSTSDNSIANTPQDYSGNMKSFPSRSPSQ. The residue at position 578 (T578) is a Phosphothreonine. Positions 641–653 are enriched in basic and acidic residues; the sequence is APSEDSGKDRDSD.

It belongs to the protein-tyrosine phosphatase family. Non-receptor class myotubularin subfamily. As to quaternary structure, heterodimer (via C-terminus) with MTMR9 (via coiled coil domain); the interaction enhances MTMR7 catalytic activity. Does not homodimerize. Interacts with RAB1B (in GDP-bound form).

The protein localises to the cytoplasm. It localises to the endomembrane system. The catalysed reaction is a 1,2-diacyl-sn-glycero-3-phospho-(1D-myo-inositol-3-phosphate) + H2O = a 1,2-diacyl-sn-glycero-3-phospho-(1D-myo-inositol) + phosphate. It catalyses the reaction 1D-myo-inositol 1,3-bisphosphate + H2O = 1D-myo-inositol 1-phosphate + phosphate. Interaction with MTMR9 increases phosphatase activity. In terms of biological role, lipid phosphatase that specifically dephosphorylates the D-3 position of phosphatidylinositol 3-phosphate (PtdIns(3)P) and inositol 1,3-bisphosphate (Ins(1,3)P2). The protein is Phosphatidylinositol-3-phosphate phosphatase MTMR7 of Pongo abelii (Sumatran orangutan).